Here is a 745-residue protein sequence, read N- to C-terminus: Myeloperoxidase (745 aa).

An N-terminal signal peptide occupies residues 1–48 (MGVPFFSSLRCMVDLGPCWAGGLTAEMKLLLALAGLLAILATPQPSEG). N-linked (GlcNAc...) asparagine glycosylation occurs at Asn-139. A disulfide bridge connects residues Cys-167 and Cys-180. Asp-260 provides a ligand contact to heme b. The active-site Proton acceptor is the His-261. Residue Asp-262 coordinates Ca(2+). Cystine bridges form between Cys-281–Cys-291 and Cys-285–Cys-309. At Cys-316 the chain carries Cysteine sulfenic acid (-SOH). Asn-323 is a glycosylation site (N-linked (GlcNAc...) asparagine). Residues Thr-334, Phe-336, Asp-338, and Ser-340 each coordinate Ca(2+). Asn-355 and Asn-391 each carry an N-linked (GlcNAc...) asparagine glycan. A disulfide bridge links Cys-387 with Cys-398. Residues Glu-408 and Met-409 each contribute to the heme b site. Asn-483 is a glycosylation site (N-linked (GlcNAc...) asparagine). His-502 is a heme b binding site. 2 cysteine pairs are disulfide-bonded: Cys-606–Cys-663 and Cys-704–Cys-730. Asn-729 carries an N-linked (GlcNAc...) asparagine glycan.

It belongs to the peroxidase family. XPO subfamily. As to quaternary structure, homodimer; disulfide-linked. Each monomer consists of a light and a heavy chain. Found in a complex with CP and LTF; interacts directly with CP, which protects CP antioxidant properties by MPO. Ca(2+) is required as a cofactor. Requires heme b as cofactor.

It localises to the lysosome. It catalyses the reaction chloride + H2O2 + H(+) = hypochlorous acid + H2O. Part of the host defense system of polymorphonuclear leukocytes. It is responsible for microbicidal activity against a wide range of organisms. In the stimulated PMN, MPO catalyzes the production of hypohalous acids, primarily hypochlorous acid in physiologic situations, and other toxic intermediates that greatly enhance PMN microbicidal activity. Mediates the proteolytic cleavage of alpha-1-microglobulin to form t-alpha-1-microglobulin, which potently inhibits oxidation of low-density lipoprotein particles and limits vascular damage. The protein is Myeloperoxidase of Homo sapiens (Human).